The primary structure comprises 235 residues: Vinculin (235 aa).

This sequence belongs to the vinculin/alpha-catenin family. Exhibits self-association properties. Post-translationally, phosphorylated on serines, threonines and tyrosines. Acetylated by myristic acid and/or palmitic acid.

It localises to the cell membrane. Its subcellular location is the cell junction. The protein localises to the adherens junction. The protein resides in the focal adhesion. It is found in the cytoplasm. It localises to the cytoskeleton. Its subcellular location is the sarcolemma. The protein localises to the cell projection. The protein resides in the podosome. In terms of biological role, involved in cell adhesion. May be involved in the attachment of the actin-based microfilaments to the plasma membrane. The protein is Vinculin (vcl) of Xenopus laevis (African clawed frog).